Consider the following 91-residue polypeptide: Salivary lectin pathway inhibitor (91 aa).

The first 21 residues, 1 to 21 (MGLTETTLVLVSLAFFASAVA), serve as a signal peptide directing secretion. Asparagine 26 and asparagine 87 each carry an N-linked (GlcNAc...) asparagine glycan.

This sequence belongs to the salp14 family. Post-translationally, glycosylated; deglycosylation largely abrogates the complement inhibitory effect. Nymph salivary gland (at protein level). Saliva (at protein level). Not detected in midgut.

Its subcellular location is the secreted. Its function is as follows. Inhibits the lectin pathway of complement system activation in the host by reducing binding of mannose-binding lectin and L-ficolin to their ligands. Does not affect the classical and alternative pathways of complement system activation in the host. Functionally, (Microbial infection) Protects Borrelia garinii (strain A87S) from host complement-mediated killing by preventing deposition of host C5b-9 membrane attack complexes on the surface of spirochetes. Inhibits phagocytosis of B.garinii (strain A87S) by human neutrophils. Impairs Borrelia-induced complement-mediated chemotaxis of human polymorphonuclear leukocytes. In terms of biological role, (Microbial infection) Protects Borrelia burgdorferi (strain N40), which is resistant to normal human serum, from Borrelia-opsonizing antibody-mediated complement-dependent killing. This is Salivary lectin pathway inhibitor from Ixodes scapularis (Black-legged tick).